We begin with the raw amino-acid sequence, 460 residues long: DL-alanine permease SerP2 (460 aa).

The next 12 membrane-spanning stretches (helical) occupy residues 26-46 (LIAI…KSIH), 47-67 (LTGP…YILL), 98-118 (FIQW…LIAI), 124-144 (FWLP…LLTL), 160-180 (FGMI…ILIF), 209-229 (FFES…IGMT), 246-266 (QIPI…MSIY), 278-298 (FVTI…NFVV), 344-364 (ALLF…IPAI), 368-388 (FVFI…MTLI), 410-430 (HIFI…LFCF), and 433-453 (TIIP…FTFF).

Belongs to the amino acid-polyamine-organocation (APC) superfamily. Amino acid transporter (AAT) (TC 2.A.3.1) family.

It is found in the cell membrane. Its function is as follows. Transports DL-alanine, DL-serine and glycine. The preferred substrate is DL-alanine. L-serine is a low-affinity substrate. The chain is DL-alanine permease SerP2 from Lactococcus lactis subsp. cremoris (strain MG1363).